A 275-amino-acid chain; its full sequence is Tumor necrosis factor-inducible gene 6 protein (275 aa).

The first 17 residues, 1–17, serve as a signal peptide directing secretion; the sequence is MVVLLCLCVLLWEEAHG. The Link domain occupies 36–129; it reads GVYHREARAG…SERWDAYCYN (94 aa). Disulfide bonds link Cys58/Cys127, Cys82/Cys103, and Cys135/Cys161. Asn118 carries an N-linked (GlcNAc...) asparagine glycan. Residues 135-247 enclose the CUB domain; it reads CGGVFTDPKR…GGFQIKYVTV (113 aa). The Ca(2+) site is built by Glu183, Asp191, Asp232, Ser234, and Val235. Cys188 and Cys210 form a disulfide bridge. The span at 253-264 shows a compositional bias: polar residues; sequence SSQAKNTSTTGN. The disordered stretch occupies residues 253–275; it reads SSQAKNTSTTGNKKFLPGRFSHL. A glycan (N-linked (GlcNAc...) asparagine) is linked at Asn258.

As to quaternary structure, interacts (via Link domain) with inter-alpha-inhibitor (I-alpha-I) component bikunin. Interacts with ITIH2/HC2; this interaction is required for transesterification of the HC to hyaluronan. Interacts (via Link and CUB domains) with ITIH1. Chondroitin sulfate may be required for the stability of the complex. Interacts (via Link domain) with various C-X-C and C-C chemokines including PF4, CXCL8, CXCL11, CXCL12, CCL2, CCL7, CCL19, CCL21, and CCL27; this interaction interferes with chemokine binding to glycosaminoglycans. Interacts (primarily via Link domain) with BMP2; this interaction is inhibited by hyaluronan. Interacts (via both Link and CUB domains) with TNFSF11. Interacts (via CUB domain) with FN1 (via type III repeats 9-14); this interaction enhances fibronectin fibril assembly. TNFAIP6 may act as a bridging molecule between FN1 and THBS1. As to expression, expressed in epiphyseal and metaphyseal bone marrow of both the femur and tibia (at protein level).

It is found in the secreted. Major regulator of extracellular matrix organization during tissue remodeling. Catalyzes the transfer of a heavy chain (HC) from inter-alpha-inhibitor (I-alpha-I) complex to hyaluronan. Cleaves the ester bond between the C-terminus of the HC and GalNAc residue of the chondroitin sulfate chain in I-alpha-I complex followed by transesterification of the HC to hyaluronan. In the process, potentiates the antiprotease function of I-alpha-I complex through release of free bikunin. Acts as a catalyst in the formation of hyaluronan-HC oligomers and hyaluronan-rich matrix surrounding the cumulus cell-oocyte complex, a necessary step for oocyte fertilization. Assembles hyaluronan in pericellular matrices that serve as platforms for receptor clustering and signaling. Enables binding of hyaluronan deposited on the surface of macrophages to LYVE1 on lymphatic endothelium and facilitates macrophage extravasation. Alters hyaluronan binding to functionally latent CD44 on vascular endothelium, switching CD44 into an active state that supports leukocyte rolling. Modulates the interaction of chemokines with extracellular matrix components and proteoglycans on endothelial cell surface, likely preventing chemokine gradient formation. In a negative feedback mechanism, may limit excessive neutrophil recruitment at inflammatory sites by antagonizing the association of CXCL8 with glycosaminoglycans on vascular endothelium. Has a role in osteogenesis and bone remodeling. Inhibits BMP2-dependent differentiation of mesenchymal stem cell to osteoblasts. Protects against bone erosion during inflammation by inhibiting TNFSF11/RANKL-dependent osteoclast activation. In Mus musculus (Mouse), this protein is Tumor necrosis factor-inducible gene 6 protein (Tnfaip6).